The sequence spans 104 residues: Large ribosomal subunit protein uL24 (104 aa).

This sequence belongs to the universal ribosomal protein uL24 family. Part of the 50S ribosomal subunit.

In terms of biological role, one of two assembly initiator proteins, it binds directly to the 5'-end of the 23S rRNA, where it nucleates assembly of the 50S subunit. Its function is as follows. One of the proteins that surrounds the polypeptide exit tunnel on the outside of the subunit. The protein is Large ribosomal subunit protein uL24 of Dichelobacter nodosus (strain VCS1703A).